We begin with the raw amino-acid sequence, 233 residues long: Large ribosomal subunit protein uL1 (233 aa).

This sequence belongs to the universal ribosomal protein uL1 family. In terms of assembly, part of the 50S ribosomal subunit.

Its function is as follows. Binds directly to 23S rRNA. The L1 stalk is quite mobile in the ribosome, and is involved in E site tRNA release. In terms of biological role, protein L1 is also a translational repressor protein, it controls the translation of the L11 operon by binding to its mRNA. The protein is Large ribosomal subunit protein uL1 of Deinococcus deserti (strain DSM 17065 / CIP 109153 / LMG 22923 / VCD115).